A 370-amino-acid polypeptide reads, in one-letter code: MSHPSPAGKPSNSKNPRVFFDVDIGGERVGRIVLELFADIVPKTAENFRALCTGEKGTGPTTGKPLHFKGCPFHRIIKKFMIQGGDFSNQNGTGGESIYGEKFEDENFHYKHDREGLLSMANAGPNTNGSQFFITTVPTPHLDGKHVVFGQVIKGLGVARMLENVEVNGEKPAKLCVIAECGELKEGDEWGIFPKDGSGDSHPDFPEDADIDLKDVDKILLISEDLKNIGNTFFKSQNWEMAIKKYAKVLRYLDSSKAVIEKADVSRLQPIALSCVLNIGACKLKMSNWQGAIDSCLEALEMDPSNTKALYRKAQGWQGLKEYDQALADLKKAQEIAPGDKAIQAELLKVKQMIKAQKDKEKAVYAKMFA.

The residue at position 5 (S5) is a Phosphoserine. The PPIase cyclophilin-type domain maps to 19-183; sequence FFDVDIGGER…KLCVIAECGE (165 aa). K171 is modified (N6-acetyllysine). The interval 185–215 is chaperone activity; the sequence is KEGDEWGIFPKDGSGDSHPDFPEDADIDLKD. S198 carries the phosphoserine modification. Residues 214 to 370 form an interaction with HSP90AB1 region; it reads KDVDKILLIS…EKAVYAKMFA (157 aa). TPR repeat units lie at residues 223–256, 273–306, and 308–340; these read SEDL…LDSS, LSCV…DPSN, and KALY…APGD.

It belongs to the cyclophilin-type PPIase family. PPIase D subfamily. As to quaternary structure, identified in ESR1 or NR3C1/GCR steroid receptor-chaperone complexes. Found in HSP90 chaperone complexes with kinase clients LCK or EIF2AK1. Two monomers associate with one HSP90 homodimer. Interacts with HSP90AA1. Interacts with HSP90AB1; PPID and FKBP4 compete for binding to HSP90AB1 and the interaction is mutually exclusive with the PPID:HSPA8 interaction. Interacts with HSPA8; PPID and STIP1 but not FKBP4 compete for binding to HSPA8 and the interaction is mutually exclusive with the PPID:HSP90AB1 interaction. Interacts with S100A1 and S100A2; the interactions dissociate the PPID:HSP90AA1 interaction. Interacts with S100A6. Interacts with MYB, ILF2, XRCC6, RACK1 and RPS3. Interacts with cytoplasmic dynein 1 intermediate chain (DYNC1I1 or DYNC1I2).

Its subcellular location is the cytoplasm. It is found in the nucleus. The protein localises to the nucleolus. It localises to the nucleoplasm. The enzyme catalyses [protein]-peptidylproline (omega=180) = [protein]-peptidylproline (omega=0). Less sensitive to inhibition by cyclosporin A than is CYP-18. PPIase that catalyzes the cis-trans isomerization of proline imidic peptide bonds in oligopeptides and may therefore assist protein folding. Proposed to act as a co-chaperone in HSP90 complexes such as in unligated steroid receptors heterocomplexes. Different co-chaperones seem to compete for association with HSP90 thus establishing distinct HSP90-co-chaperone-receptor complexes with the potential to exert tissue-specific receptor activity control. May have a preference for estrogen receptor complexes and is not found in glucocorticoid receptor complexes. May be involved in cytoplasmic dynein-dependent movement of the receptor from the cytoplasm to the nucleus. May regulate MYB by inhibiting its DNA-binding activity. Involved in regulation of AHR signaling by promoting the formation of the AHR:ARNT dimer; the function is independent of HSP90 but requires the chaperone activity region. Involved in regulation of UV radiation-induced apoptosis. This chain is Peptidyl-prolyl cis-trans isomerase D, found in Rattus norvegicus (Rat).